A 231-amino-acid polypeptide reads, in one-letter code: Probable glutathione S-transferase (231 aa).

Residues 4–96 (PNFELYGYFR…YLEEALPTNA (93 aa)) enclose the GST N-terminal domain. Residues serine 14, glutamine 43, valine 57, 80–81 (QS), glutamine 124, and 128–130 (NLK) contribute to the glutathione site. The 123-residue stretch at 105–227 (NPVARAHVRT…HWQKQEDTPE (123 aa)) folds into the GST C-terminal domain.

It belongs to the GST superfamily. Zeta family. Homodimer.

The catalysed reaction is RX + glutathione = an S-substituted glutathione + a halide anion + H(+). Functionally, probable glutathione S-transferase. The sequence is that of Probable glutathione S-transferase from Coccidioides immitis (strain RS) (Valley fever fungus).